The chain runs to 348 residues: Nicotinate-nucleotide--dimethylbenzimidazole phosphoribosyltransferase (348 aa).

The Proton acceptor role is filled by Glu-316.

It belongs to the CobT family.

It carries out the reaction 5,6-dimethylbenzimidazole + nicotinate beta-D-ribonucleotide = alpha-ribazole 5'-phosphate + nicotinate + H(+). Its pathway is nucleoside biosynthesis; alpha-ribazole biosynthesis; alpha-ribazole from 5,6-dimethylbenzimidazole: step 1/2. Its function is as follows. Catalyzes the synthesis of alpha-ribazole-5'-phosphate from nicotinate mononucleotide (NAMN) and 5,6-dimethylbenzimidazole (DMB). This is Nicotinate-nucleotide--dimethylbenzimidazole phosphoribosyltransferase from Xanthomonas axonopodis pv. citri (strain 306).